Consider the following 182-residue polypeptide: CD-NTase-associated protein 15 (182 aa).

Helical transmembrane passes span 11-31 and 33-53; these read ITGWFTVIFFLLLIIVSCTVW and IGWIDIISYTVTISTFITIGY.

This sequence belongs to the CBASS Cap15 membrane effector family. In terms of assembly, the beta barrel domain oligomerizes; in the presence of cyclic nucleotides (probably 3',2'-cGAMP) higher-level oligomers occur.

The protein resides in the cell membrane. Its function is as follows. Effector protein of a CBASS antivirus system. CBASS (cyclic oligonucleotide-based antiphage signaling system) provides immunity against bacteriophage. The CD-NTase protein (CdnE) synthesizes cyclic nucleotides in response to infection; these serve as specific second messenger signals. The signals activate a diverse range of effectors, leading to bacterial cell death and thus abortive phage infection. This system triggers membrane disruption without lysis. A type I-B CBASS system. Binds cyclic nucleotide second messenger 3',2'-cGAMP, probably oligomerizing, and induces cell membrane shrinkage and rupture, leading to cell death. In terms of biological role, protects S.aureus against phage infection. When the CBASS operon (cdnE-cap15) is introduced in S.aureus strain RN4220 there is strong protection against lytic DNA phages 80alpha-vir and phi-NM1-gamma-6 but little to no protection against phages phi-NM4-gamma-4 or phi-12-gamma-3. The chain is CD-NTase-associated protein 15 from Staphylococcus schleiferi.